The following is a 292-amino-acid chain: Trimeric intracellular cation channel type B (292 aa).

Residues 1–16 (MEYPWDDLTLAFSRTS) are Lumenal-facing. A helical membrane pass occupies residues 17 to 34 (MFPFFDIAHYLVSVMALK). Residues 35–47 (QRPGAVAAAWNNP) are Cytoplasmic-facing. A helical transmembrane segment spans residues 48–69 (LASWLSAMLHCFGGGILSCMLL). Residues 70-82 (AESPLKFLTNHTN) lie on the Lumenal side of the membrane. Residues 83-100 (ILLASSIWYIVFFCPRDL) form a helical membrane-spanning segment. The Cytoplasmic portion of the chain corresponds to 101–103 (VSQ). Residues 104–122 (GYSYQPIQFLAAGMKEVTR) form a helical membrane-spanning segment. Positions 118 and 122 each coordinate a 1,2-diacyl-sn-glycero-3-phospho-(1D-myo-inositol-4,5-bisphosphate). Residues 123–140 (TWKIVGGVSDANSYYRNA) lie on the Lumenal side of the membrane. The helical transmembrane segment at 141–158 (WIVMIVVGWARGAGGAVV) threads the bilayer. The Cytoplasmic portion of the chain corresponds to 159 to 178 (TACEQLLKGDWKPEGDEWLK). Residues 179-195 (MSFPCKITLLGSIMFTF) form a helical membrane-spanning segment. At 196–206 (QHTRHLAISKH) the chain is on the lumenal side. A helical transmembrane segment spans residues 207–225 (DLMFLYTIFLVTIKVTMMM). At 226-292 (TKDTAVTLTP…GAKRHAKKED (67 aa)) the chain is on the cytoplasmic side. Residues 248–292 (RQQQQFSSSEKKTEVKPSSNGSASSASKRGAEPSGGAKRHAKKED) form a disordered region. Low complexity predominate over residues 265–274 (SSNGSASSAS).

It belongs to the TMEM38 family. As to quaternary structure, homotrimer; conformation seems to be controled by binding to diacylglycerol (DAG). In terms of tissue distribution, widely expressed.

The protein localises to the endoplasmic reticulum membrane. The catalysed reaction is K(+)(in) = K(+)(out). Channel activity is activated by increased cytosolic Ca(2+) levels and blocked by luminal high Ca(2+) levels. Functionally, intracellular monovalent cation channel required for maintenance of rapid intracellular calcium release. Acts as a potassium counter-ion channel that functions in synchronization with calcium release from intracellular stores. Activated by increased cytosolic Ca(2+) levels. This is Trimeric intracellular cation channel type B (Tmem38b) from Mus musculus (Mouse).